The primary structure comprises 339 residues: Phenylalanine--tRNA ligase alpha subunit (339 aa).

Glu254 is a binding site for Mg(2+).

It belongs to the class-II aminoacyl-tRNA synthetase family. Phe-tRNA synthetase alpha subunit type 1 subfamily. In terms of assembly, tetramer of two alpha and two beta subunits. The cofactor is Mg(2+).

The protein localises to the cytoplasm. It catalyses the reaction tRNA(Phe) + L-phenylalanine + ATP = L-phenylalanyl-tRNA(Phe) + AMP + diphosphate + H(+). The protein is Phenylalanine--tRNA ligase alpha subunit of Clostridium botulinum (strain Langeland / NCTC 10281 / Type F).